Here is a 280-residue protein sequence, read N- to C-terminus: Octanoyl-[GcvH]:protein N-octanoyltransferase (280 aa).

One can recognise a BPL/LPL catalytic domain in the interval 40-245 (QERGAVLRAW…VLSTVSLLQN (206 aa)). The active-site Acyl-thioester intermediate is C144.

The protein belongs to the octanoyltransferase LipL family.

The catalysed reaction is N(6)-octanoyl-L-lysyl-[glycine-cleavage complex H protein] + L-lysyl-[lipoyl-carrier protein] = N(6)-octanoyl-L-lysyl-[lipoyl-carrier protein] + L-lysyl-[glycine-cleavage complex H protein]. It participates in protein modification; protein lipoylation via endogenous pathway; protein N(6)-(lipoyl)lysine from octanoyl-[acyl-carrier-protein]. Its function is as follows. Catalyzes the amidotransfer (transamidation) of the octanoyl moiety from octanoyl-GcvH to the lipoyl domain of the E2 subunit of lipoate-dependent enzymes. The sequence is that of Octanoyl-[GcvH]:protein N-octanoyltransferase from Exiguobacterium sp. (strain ATCC BAA-1283 / AT1b).